A 459-amino-acid polypeptide reads, in one-letter code: Probable 3-ketoacyl-CoA synthase 14 (459 aa).

The N-terminal stretch at 1–25 (MFIAMADFKLLLLILILLSLFELDL) is a signal peptide. The chain crosses the membrane as a helical span at residues 32-52 (FFSPFPVKIGLLLISIFFYAY). The region spanning 52–334 (YSTTRSKPVY…FILFLVKSKL (283 aa)) is the FAE domain. Residues histidine 268, histidine 352, histidine 356, histidine 385, and asparagine 389 contribute to the active site.

This sequence belongs to the thiolase-like superfamily. Chalcone/stilbene synthases family. In terms of tissue distribution, expressed in siliques.

Its subcellular location is the membrane. It catalyses the reaction a very-long-chain acyl-CoA + malonyl-CoA + H(+) = a very-long-chain 3-oxoacyl-CoA + CO2 + CoA. It functions in the pathway lipid metabolism; fatty acid biosynthesis. This Arabidopsis thaliana (Mouse-ear cress) protein is Probable 3-ketoacyl-CoA synthase 14.